A 493-amino-acid chain; its full sequence is Glycerol kinase (493 aa).

Thr-11 lines the ADP pocket. Residues Thr-11, Thr-12, and Ser-13 each coordinate ATP. Thr-11 contacts sn-glycerol 3-phosphate. Arg-15 contributes to the ADP binding site. Sn-glycerol 3-phosphate is bound by residues Arg-80, Glu-81, Tyr-132, and Asp-241. Arg-80, Glu-81, Tyr-132, Asp-241, and Gln-242 together coordinate glycerol. Positions 263 and 306 each coordinate ADP. Residues Thr-263, Gly-306, Gln-310, and Gly-408 each coordinate ATP. Gly-408 provides a ligand contact to ADP.

The protein belongs to the FGGY kinase family.

It catalyses the reaction glycerol + ATP = sn-glycerol 3-phosphate + ADP + H(+). Its pathway is polyol metabolism; glycerol degradation via glycerol kinase pathway; sn-glycerol 3-phosphate from glycerol: step 1/1. With respect to regulation, inhibited by fructose 1,6-bisphosphate (FBP). Functionally, key enzyme in the regulation of glycerol uptake and metabolism. Catalyzes the phosphorylation of glycerol to yield sn-glycerol 3-phosphate. This Cereibacter sphaeroides (strain ATCC 17029 / ATH 2.4.9) (Rhodobacter sphaeroides) protein is Glycerol kinase.